The following is a 216-amino-acid chain: Peroxiredoxin (216 aa).

Residues 2–158 (IVIGEKFPEV…ILRLVKALKI (157 aa)) form the Thioredoxin domain. Catalysis depends on C46, which acts as the Cysteine sulfenic acid (-SOH) intermediate. R121 is a binding site for substrate. A disulfide bridge connects residues C205 and C211.

This sequence belongs to the peroxiredoxin family. Prx6 subfamily. Homodecamer. Pentamer of dimers that assemble into a ring structure.

Its subcellular location is the cytoplasm. The enzyme catalyses a hydroperoxide + [thioredoxin]-dithiol = an alcohol + [thioredoxin]-disulfide + H2O. In terms of biological role, thiol-specific peroxidase that catalyzes the reduction of hydrogen peroxide and organic hydroperoxides to water and alcohols, respectively. Plays a role in cell protection against oxidative stress by detoxifying peroxides. In Pyrococcus furiosus (strain ATCC 43587 / DSM 3638 / JCM 8422 / Vc1), this protein is Peroxiredoxin.